The primary structure comprises 451 residues: tRNA-2-methylthio-N(6)-dimethylallyladenosine synthase (451 aa).

An MTTase N-terminal domain is found at 6–122; that stretch reads RRYHIITFGC…LDQLLEQVWA (117 aa). Residues cysteine 15, cysteine 51, cysteine 85, cysteine 157, cysteine 161, and cysteine 164 each coordinate [4Fe-4S] cluster. The region spanning 143 to 384 is the Radical SAM core domain; sequence RESTVSAWVN…STQAMERSQR (242 aa). The 65-residue stretch at 383–447 folds into the TRAM domain; sequence QRYLGRVEEV…AFSLTGEALS (65 aa).

Belongs to the methylthiotransferase family. MiaB subfamily. In terms of assembly, monomer. It depends on [4Fe-4S] cluster as a cofactor.

The protein resides in the cytoplasm. It carries out the reaction N(6)-dimethylallyladenosine(37) in tRNA + (sulfur carrier)-SH + AH2 + 2 S-adenosyl-L-methionine = 2-methylsulfanyl-N(6)-dimethylallyladenosine(37) in tRNA + (sulfur carrier)-H + 5'-deoxyadenosine + L-methionine + A + S-adenosyl-L-homocysteine + 2 H(+). In terms of biological role, catalyzes the methylthiolation of N6-(dimethylallyl)adenosine (i(6)A), leading to the formation of 2-methylthio-N6-(dimethylallyl)adenosine (ms(2)i(6)A) at position 37 in tRNAs that read codons beginning with uridine. The sequence is that of tRNA-2-methylthio-N(6)-dimethylallyladenosine synthase from Synechocystis sp. (strain ATCC 27184 / PCC 6803 / Kazusa).